The primary structure comprises 602 residues: Multiple epidermal growth factor-like domains protein 9 (602 aa).

Positions 1–30 (MNGGAERAMRSLPSLGGLALLCCAAAAAAA) are cleaved as a signal peptide. The Extracellular portion of the chain corresponds to 31–514 (AVASAASAGN…LADVSWTQFN (484 aa)). Residues 38-199 (AGNVTGGGGA…PATEAPSSPP (162 aa)) form a disordered region. Asparagine 40 carries an N-linked (GlcNAc...) asparagine glycan. Composition is skewed to low complexity over residues 68–85 (PRAT…PPRA) and 139–166 (APTR…TVPA). A compositionally biased stretch (pro residues) spans 167-176 (PTTPRTPTPD). An N-linked (GlcNAc...) asparagine glycan is attached at asparagine 182. Positions 187-199 (PTPPATEAPSSPP) are enriched in pro residues. Intrachain disulfides connect cysteine 204/cysteine 217, cysteine 206/cysteine 224, cysteine 226/cysteine 235, cysteine 238/cysteine 251, cysteine 254/cysteine 266, cysteine 256/cysteine 272, cysteine 274/cysteine 283, cysteine 286/cysteine 298, cysteine 301/cysteine 310, cysteine 303/cysteine 317, cysteine 320/cysteine 329, cysteine 332/cysteine 346, cysteine 349/cysteine 360, cysteine 351/cysteine 371, cysteine 374/cysteine 383, cysteine 386/cysteine 397, cysteine 400/cysteine 415, cysteine 402/cysteine 422, cysteine 425/cysteine 434, and cysteine 437/cysteine 449. Laminin EGF-like domains follow at residues 204 to 253 (CNCS…LCQP), 254 to 300 (CDCS…GCLP), 301 to 348 (CQCN…ECLR), 349 to 399 (CPCS…ICRK), and 400 to 451 (CQCH…NCIK). 2 N-linked (GlcNAc...) asparagine glycosylation sites follow: asparagine 205 and asparagine 218. An N-linked (GlcNAc...) asparagine glycan is attached at asparagine 245. The N-linked (GlcNAc...) asparagine glycan is linked to asparagine 267. Asparagine 305 carries N-linked (GlcNAc...) asparagine glycosylation. Asparagine 428 carries an N-linked (GlcNAc...) asparagine glycan. N-linked (GlcNAc...) asparagine glycans are attached at residues asparagine 468, asparagine 481, and asparagine 500. The chain crosses the membrane as a helical span at residues 515 to 535 (IIILTVIIIVVVLLMGFVGAV). Over 536–602 (YMYREYQNRK…LTTPIHNYKA (67 aa)) the chain is Cytoplasmic.

The protein localises to the membrane. The protein is Multiple epidermal growth factor-like domains protein 9 (MEGF9) of Homo sapiens (Human).